Reading from the N-terminus, the 309-residue chain is tRNA pseudouridine synthase B (309 aa).

The Nucleophile role is filled by Asp-51.

The protein belongs to the pseudouridine synthase TruB family. Type 1 subfamily.

The enzyme catalyses uridine(55) in tRNA = pseudouridine(55) in tRNA. Functionally, responsible for synthesis of pseudouridine from uracil-55 in the psi GC loop of transfer RNAs. The protein is tRNA pseudouridine synthase B of Coxiella burnetii (strain RSA 331 / Henzerling II).